A 612-amino-acid polypeptide reads, in one-letter code: 1-deoxy-D-xylulose-5-phosphate synthase (612 aa).

Thiamine diphosphate contacts are provided by residues histidine 77 and 118–120 (GHS). Aspartate 147 contacts Mg(2+). Residues 148-149 (AA), asparagine 176, tyrosine 288, and glutamate 365 contribute to the thiamine diphosphate site. Mg(2+) is bound at residue asparagine 176.

It belongs to the transketolase family. DXPS subfamily. As to quaternary structure, homodimer. The cofactor is Mg(2+). Thiamine diphosphate is required as a cofactor.

It catalyses the reaction D-glyceraldehyde 3-phosphate + pyruvate + H(+) = 1-deoxy-D-xylulose 5-phosphate + CO2. It participates in metabolic intermediate biosynthesis; 1-deoxy-D-xylulose 5-phosphate biosynthesis; 1-deoxy-D-xylulose 5-phosphate from D-glyceraldehyde 3-phosphate and pyruvate: step 1/1. Catalyzes the acyloin condensation reaction between C atoms 2 and 3 of pyruvate and glyceraldehyde 3-phosphate to yield 1-deoxy-D-xylulose-5-phosphate (DXP). The protein is 1-deoxy-D-xylulose-5-phosphate synthase of Malacoplasma penetrans (strain HF-2) (Mycoplasma penetrans).